The chain runs to 129 residues: Large-conductance mechanosensitive channel (129 aa).

Helical transmembrane passes span 8-28 (FAFR…AAFS), 30-50 (IIKS…IGGI), and 67-87 (GQFL…FLFV).

It belongs to the MscL family. Homopentamer.

The protein localises to the cell membrane. Its function is as follows. Channel that opens in response to stretch forces in the membrane lipid bilayer. May participate in the regulation of osmotic pressure changes within the cell. The chain is Large-conductance mechanosensitive channel from Exiguobacterium sibiricum (strain DSM 17290 / CCUG 55495 / CIP 109462 / JCM 13490 / 255-15).